Here is a 361-residue protein sequence, read N- to C-terminus: tRNA-specific 2-thiouridylase MnmA (361 aa).

ATP is bound by residues 6-13 (AMSGGVDS) and Leu32. Residue Cys99 is the Nucleophile of the active site. Cysteines 99 and 196 form a disulfide. Gly123 lines the ATP pocket. Positions 145–147 (RDQ) are interaction with tRNA. The active-site Cysteine persulfide intermediate is the Cys196.

It belongs to the MnmA/TRMU family.

The protein localises to the cytoplasm. The catalysed reaction is S-sulfanyl-L-cysteinyl-[protein] + uridine(34) in tRNA + AH2 + ATP = 2-thiouridine(34) in tRNA + L-cysteinyl-[protein] + A + AMP + diphosphate + H(+). In terms of biological role, catalyzes the 2-thiolation of uridine at the wobble position (U34) of tRNA, leading to the formation of s(2)U34. This is tRNA-specific 2-thiouridylase MnmA from Gluconobacter oxydans (strain 621H) (Gluconobacter suboxydans).